A 501-amino-acid chain; its full sequence is Aspartate--tRNA ligase, cytoplasmic (501 aa).

The residue at position 52 (Thr-52) is a Phosphothreonine. Residue Lys-74 is modified to N6-acetyllysine. Residue Glu-229 coordinates L-aspartate. Residue Ser-249 is modified to Phosphoserine. Residues 251–254 (QLYK) are aspartate. Arg-273 is an L-aspartate binding site. ATP is bound by residues 273–275 (RAE) and 281–283 (RHL). Lys-374 is modified (N6-acetyllysine). An ATP-binding site is contributed by Glu-424. The L-aspartate site is built by Ser-427 and Arg-431. Position 472 to 475 (472 to 475 (GLER)) interacts with ATP.

The protein belongs to the class-II aminoacyl-tRNA synthetase family. Type 2 subfamily. Homodimer. Part of a multisubunit complex that groups tRNA ligases for Arg (RARS1), Asp (DARS1), Gln (QARS1), Ile (IARS1), Leu (LARS1), Lys (KARS1), Met (MARS1) the bifunctional ligase for Glu and Pro (EPRS1) and the auxiliary subunits AIMP1/p43, AIMP2/p38 and EEF1E1/p18.

The protein localises to the cytoplasm. The catalysed reaction is tRNA(Asp) + L-aspartate + ATP = L-aspartyl-tRNA(Asp) + AMP + diphosphate. In terms of biological role, catalyzes the specific attachment of an amino acid to its cognate tRNA in a 2 step reaction: the amino acid (AA) is first activated by ATP to form AA-AMP and then transferred to the acceptor end of the tRNA. The protein is Aspartate--tRNA ligase, cytoplasmic (Dars1) of Rattus norvegicus (Rat).